Here is a 421-residue protein sequence, read N- to C-terminus: Zinc finger protein 57 (421 aa).

The region spanning 15 to 88 is the KRAB domain; sequence VSYEDVAVSF…SCTGVFKGGP (74 aa). The segment at 90-113 adopts a C2H2-type 1; degenerate zinc-finger fold; sequence FFCLTCGKCFKKNTFLFNHQFPVR. 2 C2H2-type zinc fingers span residues 140–162 and 168–190; these read FFCNFCGKTYRDASGLSRHRRAH and RSCPECGKCFRDQSEVNRHLKVH. Residues 191–221 are disordered; that stretch reads QNKPAASNQAGNQASNQRLKSRVPPTTPRSQ. Residues 195–207 show a composition bias toward low complexity; sequence AASNQAGNQASNQ. The C2H2-type 4 zinc-finger motif lies at 264 to 286; the sequence is ISCPYCHITFTMRTCLLTHLKIH. The C2H2-type 5; degenerate zinc-finger motif lies at 313–332; it reads YTCPVCDSSFRGKESLLDHL. A disordered region spans residues 371–421; that stretch reads GKRMESRRRRRKRACTENPETEGLSGKGRVAPWEMEGATSPESPVTEEDSD.

Belongs to the krueppel C2H2-type zinc-finger protein family. As to expression, expressed in oocytes and in a subset of adult tissues. Expressed at high levels in testis, and at low levels in cerebellum. Present in sciatic nerve and spinal cord (at protein level).

The protein localises to the nucleus. Its function is as follows. Transcription regulator required to maintain maternal and paternal gene imprinting, a process by which gene expression is restricted in a parent of origin-specific manner by epigenetic modification of genomic DNA and chromatin, including DNA methylation. Acts by controlling DNA methylation during the earliest multicellular stages of development at multiple imprinting control regions (ICRs). Acts together with ZNF445, but ZFP57 plays the predominant role in imprinting maintenance. In contrast, in humans, ZNF445 seems to be the major factor early embryonic imprinting maintenance. Required for the establishment of maternal methylation imprints at SNRPN locus. Acts as a transcriptional repressor in Schwann cells. Binds to a 5'-TGCCGC-3' consensus sequence and recognizes the methylated CpG within this element. The sequence is that of Zinc finger protein 57 (Zfp57) from Mus musculus (Mouse).